A 367-amino-acid chain; its full sequence is Probable butyrate kinase (367 aa).

The protein belongs to the acetokinase family.

It is found in the cytoplasm. It catalyses the reaction butanoate + ATP = butanoyl phosphate + ADP. In Bacillus cereus (strain Q1), this protein is Probable butyrate kinase.